A 503-amino-acid polypeptide reads, in one-letter code: MQMEFSFSSPSFFFLLPFLFLLIKPLISRKSSLKLPPGPKKFPIVGNLFQMEGLLPHLALKKMTDKYGPICHLKLGELEAVVVSSAELAKEVLNTHAVTFADRPVTNVSKIVMYNNSGMTFARYGDYFKLLRQIYASELLSPKRVRSSSNHMEDELSKFVVKIQAETGKPIFLHDRVKSYLFAVLFDSMIGGVCKCPERYIEAAKELSANSAAMRLEDFFPSVTLLPKLSGFNTVLAKLKKEIDDLLDDLISEREKRPANATGPMEEHMLDVLLKLRNGSGSEAKIPITNEDIKAVVFELMLANLSTAATEEWAMSEMMRNPKVFKKAQDEVRRAFKGKNRICASELHKLEYLKLVIKEALRMHPPAPLLFPRKAREDCEIGGYTIPAGTMVWVNYWAVGRDPQLWHDADKFEPERFSDTSIDFNGSHSELIPFGAGRRICPGILYSATNLELLLSALLYHFDWELPSGEKPEEIDMDEFYGSGCIRKNPLALVPKVVIPCQA.

The helical transmembrane segment at 7–27 threads the bilayer; it reads FSSPSFFFLLPFLFLLIKPLI. Cys-441 is a heme binding site.

This sequence belongs to the cytochrome P450 family. The cofactor is heme.

Its subcellular location is the membrane. It carries out the reaction (19E)-geissoschizine + reduced [NADPH--hemoprotein reductase] + O2 = akuammicine + formate + oxidized [NADPH--hemoprotein reductase] + H2O + H(+). It catalyses the reaction (19E)-geissoschizine + reduced [NADPH--hemoprotein reductase] + O2 = 3,17-didehydrostemmadenine + oxidized [NADPH--hemoprotein reductase] + 2 H2O. The enzyme catalyses 3,17-didehydrostemmadenine = 17-dehydropreakuammicine. The protein operates within alkaloid biosynthesis. Monooxygenase involved in the biosynthesis of curare monoterpene indole alkaloids (MIAs), natural products such as diaboline, a pharmacologically active compound used to regulate blood pressure. Curare alkaloids act as animal glycine receptor antagonists. Catalyzes the conversion of geissoschizine to dehydropreakuammicine by cyclization, which is spontaneously converted into akuammicine by aromatization. This Strychnos sp protein is Geissoschizine oxidase.